Here is a 122-residue protein sequence, read N- to C-terminus: Large ribosomal subunit protein uL14 (122 aa).

This sequence belongs to the universal ribosomal protein uL14 family. As to quaternary structure, part of the 50S ribosomal subunit. Forms a cluster with proteins L3 and L19. In the 70S ribosome, L14 and L19 interact and together make contacts with the 16S rRNA in bridges B5 and B8.

Binds to 23S rRNA. Forms part of two intersubunit bridges in the 70S ribosome. The protein is Large ribosomal subunit protein uL14 of Ruthia magnifica subsp. Calyptogena magnifica.